A 414-amino-acid polypeptide reads, in one-letter code: Ceramide synthase 5 (414 aa).

Residues 1 to 43 lie on the Lumenal side of the membrane; the sequence is MATAAAETLGLLWGWLWSESFWLPQNVSWADLEGPGDGYGYPR. An N-linked (GlcNAc...) asparagine glycan is attached at Asn26. The helical transmembrane segment at 44-64 threads the bilayer; it reads AQHVLSVFPLAVCIFSVRMLF. The interval 75-136 is homeobox-like; the sequence is RVGIKDSPVN…RHRRNQDKPP (62 aa). Residues 139-340 enclose the TLC domain; it reads TKFCESMWRF…IVQTASKALS (202 aa). 4 helical membrane-spanning segments follow: residues 148 to 168, 187 to 207, 214 to 234, and 272 to 292; these read FTYYLCIFCYGIRFLWSMPWF, LYYYYITQLAFYWSLMFSQFI, FLMMFIHHMIGIMLTTFSYVN, and LFVIFGAAFIVSRLAIFPLWI. The Last loop motif signature appears at 299–309; that stretch reads ESWEIIGPYPS. Residues 312 to 332 traverse the membrane as a helical segment; that stretch reads LFNALLLILQVLHAIWSYLIV. At 333–414 the chain is on the cytoplasmic side; it reads QTASKALSRG…RASPHLHSCD (82 aa). Residues 347–373 form a disordered region; it reads DDRSDVESSSEEEDETTHKNNLSGSSS.

Interacts with PAQR4; the interaction regulates the stability and activity of CERS5 and is inhibited in presence of ceramides. Phosphorylated at the C-terminus by CK2. As to expression, ubiquitously expressed, with highest levels in testis and kidney. Expressed in pulmonary epithelia.

Its subcellular location is the endoplasmic reticulum membrane. It carries out the reaction a sphingoid base + hexadecanoyl-CoA = an N-hexadecanoyl-sphingoid base + CoA + H(+). The enzyme catalyses sphinganine + hexadecanoyl-CoA = N-hexadecanoylsphinganine + CoA + H(+). It catalyses the reaction hexadecasphinganine + hexadecanoyl-CoA = N-hexadecanoylhexadecasphinganine + CoA + H(+). The catalysed reaction is sphing-4-enine + hexadecanoyl-CoA = N-hexadecanoylsphing-4-enine + CoA + H(+). It carries out the reaction 2-hydroxyhexadecanoyl-CoA + sphinganine = N-(2-hydroxyhexadecanoyl)-sphinganine + CoA + H(+). The enzyme catalyses sphinganine + tetradecanoyl-CoA = N-(tetradecanoyl)-sphinganine + CoA + H(+). It catalyses the reaction sphinganine + octadecanoyl-CoA = N-(octadecanoyl)-sphinganine + CoA + H(+). The catalysed reaction is sphinganine + (9Z)-octadecenoyl-CoA = N-(9Z-octadecenoyl)-sphinganine + CoA + H(+). It carries out the reaction a fatty acyl-CoA + sphing-4-enine = an N-acylsphing-4-enine + CoA + H(+). The enzyme catalyses tetracosenoyl-CoA + sphing-4-enine = N-(tetracosenoyl)-sphing-4-enine + CoA + H(+). The protein operates within lipid metabolism; sphingolipid metabolism. Inhibited by fumonisin B1. Functionally, ceramide synthase that catalyzes the transfer of the acyl chain from acyl-CoA to a sphingoid base, with high selectivity toward palmitoyl-CoA (hexadecanoyl-CoA; C16:0-CoA). Can use other acyl donors, but with less efficiency. N-acylates sphinganine and sphingosine bases to form dihydroceramides and ceramides in de novo synthesis and salvage pathways, respectively. Plays a role in de novo ceramide synthesis and surfactant homeostasis in pulmonary epithelia. In Mus musculus (Mouse), this protein is Ceramide synthase 5.